The primary structure comprises 417 residues: Serine hydroxymethyltransferase (417 aa).

Residues Leu117 and 121 to 123 (GHL) each bind (6S)-5,6,7,8-tetrahydrofolate. An N6-(pyridoxal phosphate)lysine modification is found at Lys226.

Belongs to the SHMT family. Homodimer. Pyridoxal 5'-phosphate serves as cofactor.

The protein resides in the cytoplasm. The enzyme catalyses (6R)-5,10-methylene-5,6,7,8-tetrahydrofolate + glycine + H2O = (6S)-5,6,7,8-tetrahydrofolate + L-serine. It participates in one-carbon metabolism; tetrahydrofolate interconversion. It functions in the pathway amino-acid biosynthesis; glycine biosynthesis; glycine from L-serine: step 1/1. Functionally, catalyzes the reversible interconversion of serine and glycine with tetrahydrofolate (THF) serving as the one-carbon carrier. This reaction serves as the major source of one-carbon groups required for the biosynthesis of purines, thymidylate, methionine, and other important biomolecules. Also exhibits THF-independent aldolase activity toward beta-hydroxyamino acids, producing glycine and aldehydes, via a retro-aldol mechanism. This Shouchella clausii (strain KSM-K16) (Alkalihalobacillus clausii) protein is Serine hydroxymethyltransferase.